We begin with the raw amino-acid sequence, 32 residues long: CSNLSTCVLGKLSQELHKLQTYPRTDVGAGTP.

Cysteine 1 and cysteine 7 form a disulfide bridge. Proline 32 carries the post-translational modification Proline amide.

The protein belongs to the calcitonin family.

The protein localises to the secreted. In terms of biological role, causes a rapid but short-lived drop in the level of calcium and phosphate in blood by promoting the incorporation of those ions in the bones. This chain is Calcitonin, found in Anguilla japonica (Japanese eel).